The chain runs to 226 residues: Probable septum site-determining protein MinC (226 aa).

The protein belongs to the MinC family. As to quaternary structure, interacts with MinD and FtsZ.

Cell division inhibitor that blocks the formation of polar Z ring septums. Rapidly oscillates between the poles of the cell to destabilize FtsZ filaments that have formed before they mature into polar Z rings. Prevents FtsZ polymerization. The sequence is that of Probable septum site-determining protein MinC from Bacillus velezensis (strain DSM 23117 / BGSC 10A6 / LMG 26770 / FZB42) (Bacillus amyloliquefaciens subsp. plantarum).